The chain runs to 37 residues: Large ribosomal subunit protein bL36c (37 aa).

This sequence belongs to the bacterial ribosomal protein bL36 family.

The protein localises to the plastid. Its subcellular location is the chloroplast. The polypeptide is Large ribosomal subunit protein bL36c (Cryptomeria japonica (Japanese cedar)).